A 771-amino-acid polypeptide reads, in one-letter code: Glucocorticoid receptor (771 aa).

The interval 1-415 is modulating; sequence MDLKESVTSS…STTTGPPPKL (415 aa). Thr-8 is subject to Phosphothreonine. Arg-22 carries the omega-N-methylarginine modification. Phosphoserine occurs at positions 44, 133, 199, 207, and 222. Residues 129–172 are compositionally biased toward polar residues; the sequence is SRSTSVPENPKNSASAVSGTPTEEFPKTQSDLSSEQENLKSQAG. The disordered stretch occupies residues 129-184; it reads SRSTSVPENPKNSASAVSGTPTEEFPKTQSDLSSEQENLKSQAGTNGGNVKFPPDQ. A Glycyl lysine isopeptide (Lys-Gly) (interchain with G-Cter in SUMO2) cross-link involves residue Lys-254. The residue at position 263 (Ser-263) is a Phosphoserine. Glycyl lysine isopeptide (Lys-Gly) (interchain with G-Cter in SUMO); alternate cross-links involve residues Lys-273 and Lys-289. Residues Lys-273 and Lys-289 each participate in a glycyl lysine isopeptide (Lys-Gly) (interchain with G-Cter in SUMO2); alternate cross-link. Phosphoserine is present on residues Ser-303 and Ser-400. A disordered region spans residues 390–411; it reads SSPGLRPDVSSPPSSSSTTTGP. The span at 400 to 409 shows a compositional bias: low complexity; it reads SPPSSSSTTT. Residue Lys-414 forms a Glycyl lysine isopeptide (Lys-Gly) (interchain with G-Cter in ubiquitin) linkage. NR C4-type zinc fingers lie at residues 416–436 and 452–476; these read CLVCSDELSGCHYGVLTCGSC and CAGRNDCIIDKIRRENCPACRYRKC. Residues 416–481 constitute a DNA-binding region (nuclear receptor); that stretch reads CLVCSDELSG…RYRKCLQAGM (66 aa). Residues Lys-475, Lys-487, Lys-489, and Lys-490 each carry the N6-acetyllysine modification. Residues 480–771 form an interaction with CLOCK region; sequence GMNLQARKTK…DIKKLLFHQK (292 aa). The hinge stretch occupies residues 482 to 517; it reads NLQARKTKKKIKGIQQATTGVSQNTSENPNKTIVPA. The NR LBD domain maps to 518 to 752; it reads TLPQLTPTLV…FPEMLAEIIT (235 aa). Residues 526 to 691 are interaction with CRY1; that stretch reads LVSLLEVIEP…EIRMTYIKEL (166 aa). Residue Lys-697 forms a Glycyl lysine isopeptide (Lys-Gly) (interchain with G-Cter in SUMO) linkage.

The protein belongs to the nuclear hormone receptor family. NR3 subfamily. In terms of assembly, heteromultimeric cytoplasmic complex with HSP90AA1, HSPA1A/HSPA1B, and FKBP5 or another immunophilin such as PPID, STIP1, or the immunophilin homolog PPP5C. Upon ligand binding FKBP5 dissociates from the complex and FKBP4 takes its place, thereby linking the complex to dynein and mediating transport to the nucleus, where the complex dissociates. Probably forms a complex composed of chaperones HSP90 and HSP70, co-chaperones CDC37, PPP5C, TSC1 and client protein TSC2, CDK4, AKT, RAF1 and NR3C1; this complex does not contain co-chaperones STIP1/HOP and PTGES3/p23. Directly interacts with UNC45A. Binds to DNA as a homodimer, and as heterodimer with NR3C2 or the retinoid X receptor. Binds STAT5A and STAT5B homodimers and heterodimers. Interacts with NRIP1, POU2F1, POU2F2 and TRIM28. Interacts with several coactivator complexes, including the SMARCA4 complex, CREBBP/EP300, TADA2L (Ada complex) and p160 coactivators such as NCOA2 and NCOA6. Interaction with BAG1 inhibits transactivation. Interacts with HEXIM1 and TGFB1I1. Interacts with NCOA1. Interacts with NCOA3, SMARCA4, SMARCC1, SMARCD1, and SMARCE1. Interacts with CLOCK, CRY1 and CRY2 in a ligand-dependent fashion. Interacts with CIART. Interacts with RWDD3. Interacts with UBE2I/UBC9 and this interaction is enhanced in the presence of RWDD3. Interacts with GRIP1. Interacts with NR4A3 (via nuclear receptor DNA-binding domain), represses transcription activity of NR4A3 on the POMC promoter Nur response element (NurRE). Directly interacts with PNRC2 to attract and form a complex with UPF1 and DCP1A; the interaction leads to rapid mRNA degradation. Interacts with GSK3B. Interacts with FNIP1 and FNIP2. Interacts (via C-terminus) with HNRNPU (via C-terminus). Interacts with MCM3AP. Interacts (via domain NR LBD) with HSP90AA1 and HSP90AB1. In the absence of hormonal ligand, interacts with TACC1. Interacts (via NR LBD domain) with ZNF764 (via KRAB domain); the interaction regulates transcription factor activity of NR3C1 by directing its actions toward certain biologic pathways. In terms of processing, acetylation by CLOCK reduces its binding to glucocorticoid response elements and its transcriptional activity. Increased proteasome-mediated degradation in response to glucocorticoids. Post-translationally, phosphorylated in the absence of hormone; becomes hyperphosphorylated in the presence of glucocorticoid. The Ser-199, Ser-222 and Ser-400-phosphorylated forms are mainly cytoplasmic, and the Ser-207-phosphorylated form is nuclear. Phosphorylation at Ser-207 increases transcriptional activity. Phosphorylation at Ser-199, Ser-222 and Ser-400 decreases signaling capacity. Phosphorylation at Ser-400 may protect from glucocorticoid-induced apoptosis. Phosphorylation at Ser-199 and Ser-207 is not required in regulation of chromosome segregation. May be dephosphorylated by PPP5C, attenuates NR3C1 action. In terms of processing, ubiquitinated by UBR5, leading to its degradation: UBR5 specifically recognizes and binds ligand-bound NR3C1 when it is not associated with coactivators (NCOAs). In presence of NCOAs, the UBR5-degron is not accessible, preventing its ubiquitination and degradation. Sumoylation at Lys-273 and Lys-289 negatively regulates its transcriptional activity. Sumoylation at Lys-697 positively regulates its transcriptional activity in the presence of RWDD3. Sumoylation at Lys-273 and Lys-289 is dispensable whereas sumoylation at Lys-697 is critical for the stimulatory effect of RWDD3 on its transcriptional activity. Heat shock increases sumoylation in a RWDD3-dependent manner.

The protein localises to the cytoplasm. It is found in the nucleus. It localises to the mitochondrion. Its subcellular location is the cytoskeleton. The protein resides in the spindle. The protein localises to the microtubule organizing center. It is found in the centrosome. It localises to the chromosome. Its subcellular location is the nucleoplasm. Its function is as follows. Receptor for glucocorticoids (GC). Has a dual mode of action: as a transcription factor that binds to glucocorticoid response elements (GRE), both for nuclear and mitochondrial DNA, and as a modulator of other transcription factors. Affects inflammatory responses, cellular proliferation and differentiation in target tissues. Involved in chromatin remodeling. Plays a role in rapid mRNA degradation by binding to the 5' UTR of target mRNAs and interacting with PNRC2 in a ligand-dependent manner which recruits the RNA helicase UPF1 and the mRNA-decapping enzyme DCP1A, leading to RNA decay. Could act as a coactivator for STAT5-dependent transcription upon growth hormone (GH) stimulation and could reveal an essential role of hepatic GR in the control of body growth. Mediates glucocorticoid-induced apoptosis. Promotes accurate chromosome segregation during mitosis. May act as a tumor suppressor. May play a negative role in adipogenesis through the regulation of lipolytic and antilipogenic gene expression. In Cavia porcellus (Guinea pig), this protein is Glucocorticoid receptor (NR3C1).